We begin with the raw amino-acid sequence, 476 residues long: Aspartyl/glutamyl-tRNA(Asn/Gln) amidotransferase subunit B (476 aa).

The protein belongs to the GatB/GatE family. GatB subfamily. As to quaternary structure, heterotrimer of A, B and C subunits.

It catalyses the reaction L-glutamyl-tRNA(Gln) + L-glutamine + ATP + H2O = L-glutaminyl-tRNA(Gln) + L-glutamate + ADP + phosphate + H(+). The catalysed reaction is L-aspartyl-tRNA(Asn) + L-glutamine + ATP + H2O = L-asparaginyl-tRNA(Asn) + L-glutamate + ADP + phosphate + 2 H(+). In terms of biological role, allows the formation of correctly charged Asn-tRNA(Asn) or Gln-tRNA(Gln) through the transamidation of misacylated Asp-tRNA(Asn) or Glu-tRNA(Gln) in organisms which lack either or both of asparaginyl-tRNA or glutaminyl-tRNA synthetases. The reaction takes place in the presence of glutamine and ATP through an activated phospho-Asp-tRNA(Asn) or phospho-Glu-tRNA(Gln). This Neisseria meningitidis serogroup C / serotype 2a (strain ATCC 700532 / DSM 15464 / FAM18) protein is Aspartyl/glutamyl-tRNA(Asn/Gln) amidotransferase subunit B.